Consider the following 179-residue polypeptide: Large ribosomal subunit protein uL5 (179 aa).

Belongs to the universal ribosomal protein uL5 family. Part of the 50S ribosomal subunit; part of the 5S rRNA/L5/L18/L25 subcomplex. Contacts the 5S rRNA and the P site tRNA. Forms a bridge to the 30S subunit in the 70S ribosome.

In terms of biological role, this is one of the proteins that bind and probably mediate the attachment of the 5S RNA into the large ribosomal subunit, where it forms part of the central protuberance. In the 70S ribosome it contacts protein S13 of the 30S subunit (bridge B1b), connecting the 2 subunits; this bridge is implicated in subunit movement. Contacts the P site tRNA; the 5S rRNA and some of its associated proteins might help stabilize positioning of ribosome-bound tRNAs. The chain is Large ribosomal subunit protein uL5 from Rhodospirillum rubrum (strain ATCC 11170 / ATH 1.1.1 / DSM 467 / LMG 4362 / NCIMB 8255 / S1).